The following is a 339-amino-acid chain: NADH-quinone oxidoreductase subunit H (339 aa).

The next 9 membrane-spanning stretches (helical) occupy residues 10–30 (FPLI…ILCV), 50–70 (PNVV…KLLF), 82–102 (ILFI…WAVV), 115–135 (VGVL…IIAG), 161–181 (MGLV…SGII), 187–207 (IPWW…ISVL), 235–255 (MGFA…SAMT), 275–295 (IPGF…FLWI), and 310–330 (LGWK…SSVL).

Belongs to the complex I subunit 1 family. In terms of assembly, NDH-1 is composed of 14 different subunits. Subunits NuoA, H, J, K, L, M, N constitute the membrane sector of the complex.

It is found in the cell inner membrane. The catalysed reaction is a quinone + NADH + 5 H(+)(in) = a quinol + NAD(+) + 4 H(+)(out). Functionally, NDH-1 shuttles electrons from NADH, via FMN and iron-sulfur (Fe-S) centers, to quinones in the respiratory chain. The immediate electron acceptor for the enzyme in this species is believed to be ubiquinone. Couples the redox reaction to proton translocation (for every two electrons transferred, four hydrogen ions are translocated across the cytoplasmic membrane), and thus conserves the redox energy in a proton gradient. This subunit may bind ubiquinone. The protein is NADH-quinone oxidoreductase subunit H of Rickettsia canadensis (strain McKiel).